A 328-amino-acid polypeptide reads, in one-letter code: MTSTKQHKKVILVGDGAVGSSYAFALVNQGIAQELGIIEIPQLHEKAVGDALDLSHALAFTSPKKIYAAKYEDCADADLVVITAGAPQKPGETRLDLVGKNLAINKSIVTQVVASGFDGIFLVAANPVDVLTYSTWKFSGFPKERVIGSGTSLDSARFRQALAEKLDVDARSVHAYIMGEHGDSEFAVWSHANIAGVNLEEFLKDTQNVQEAELIELFEGVRDAAYTIINKKGATYYGIAVALARITKAILDDENAVLPLSVFQEGQYGVKNVFIGQPAVVGAHGIVRPVNIPLNDAETQKMQASAKELQAIIDEAWKNPEFQAASKN.

NAD(+) is bound by residues V18, E39, K46, Y71, and 85-86; that span reads GA. Positions 88 and 94 each coordinate substrate. NAD(+)-binding positions include S107, 124–126, and S149; that span reads AAN. 126-129 lines the substrate pocket; sequence NPVD. Residue 154–157 coordinates substrate; it reads DSAR. 2 residues coordinate beta-D-fructose 1,6-bisphosphate: R159 and H174. H181 functions as the Proton acceptor in the catalytic mechanism. Y226 bears the Phosphotyrosine mark. T235 lines the substrate pocket.

It belongs to the LDH/MDH superfamily. LDH family. In terms of assembly, homotetramer.

It is found in the cytoplasm. The catalysed reaction is (S)-lactate + NAD(+) = pyruvate + NADH + H(+). The protein operates within fermentation; pyruvate fermentation to lactate; (S)-lactate from pyruvate: step 1/1. Allosterically activated by fructose 1,6-bisphosphate (FBP). Catalyzes the conversion of lactate to pyruvate. This Streptococcus gordonii (strain Challis / ATCC 35105 / BCRC 15272 / CH1 / DL1 / V288) protein is L-lactate dehydrogenase.